The following is a 741-amino-acid chain: Zinc finger and BTB domain-containing protein 20 (741 aa).

Residues 1 to 17 are compositionally biased toward basic and acidic residues; that stretch reads MLERKKPKTAENQKASE. Residues 1-32 are disordered; sequence MLERKKPKTAENQKASEENEITQPGGSSAKPG. The 64-residue stretch at 104–167 folds into the BTB domain; sequence CDVTVRIHGS…MYSGVLRVSQ (64 aa). Residues 203–235 form a disordered region; that stretch reads GIQDSGQDTPRGTPESGTSGQSSDTESGYLQSH. The segment covering 206–235 has biased composition (polar residues); that stretch reads DSGQDTPRGTPESGTSGQSSDTESGYLQSH. Thr211 carries the phosphothreonine modification. A Glycyl lysine isopeptide (Lys-Gly) (interchain with G-Cter in SUMO1); alternate cross-link involves residue Lys330. A Glycyl lysine isopeptide (Lys-Gly) (interchain with G-Cter in SUMO2); alternate cross-link involves residue Lys330. Residues 350–440 form a disordered region; that stretch reads RNESEECTED…SSPERSNEVE (91 aa). Ser353 carries the post-translational modification Phosphoserine. Over residues 354 to 367 the composition is skewed to acidic residues; sequence EECTEDTDQAEGTE. Thr357 is subject to Phosphothreonine. Lys371 participates in a covalent cross-link: Glycyl lysine isopeptide (Lys-Gly) (interchain with G-Cter in SUMO2). The span at 404–423 shows a compositional bias: low complexity; it reads AEPTQPEQAAEAPAEGGPQT. The segment covering 424–434 has biased composition (polar residues); the sequence is NQLETGASSPE. 4 consecutive C2H2-type zinc fingers follow at residues 578-600, 606-628, 634-656, and 662-684; these read YECT…MFVH, HQCS…MVTH, YQCS…MRLH, and YECY…VALH. 2 positions are modified to phosphothreonine: Thr690 and Thr695. Residues 715–737 form a C2H2-type 5 zinc finger; it reads YVCSVCPAKFDQIEQFNDHMRMH. Residue Lys723 forms a Glycyl lysine isopeptide (Lys-Gly) (interchain with G-Cter in SUMO2) linkage.

Can homodimerize. Binds to DNA. Post-translationally, sumoylated with SUMO1. In terms of tissue distribution, expressed in spleen, lymph node, thymus, peripheral blood leukocytes, and fetal liver.

The protein resides in the nucleus. May be a transcription factor that may be involved in hematopoiesis, oncogenesis, and immune responses. Plays a role in postnatal myogenesis, may be involved in the regulation of satellite cells self-renewal. The chain is Zinc finger and BTB domain-containing protein 20 (ZBTB20) from Homo sapiens (Human).